A 538-amino-acid polypeptide reads, in one-letter code: Phosphoenolpyruvate carboxykinase (ATP) (538 aa).

Substrate-binding residues include R64, Y205, and K211. Residues K211, H230, and 246–254 (GLSGTGKTT) contribute to the ATP site. Positions 211 and 230 each coordinate Mn(2+). D267 serves as a coordination point for Mn(2+). ATP contacts are provided by residues E295, R331, 447–448 (RI), and T453. R331 is a binding site for substrate.

This sequence belongs to the phosphoenolpyruvate carboxykinase (ATP) family. Monomer. Requires Mn(2+) as cofactor.

The protein localises to the cytoplasm. The catalysed reaction is oxaloacetate + ATP = phosphoenolpyruvate + ADP + CO2. It functions in the pathway carbohydrate biosynthesis; gluconeogenesis. Involved in the gluconeogenesis. Catalyzes the conversion of oxaloacetate (OAA) to phosphoenolpyruvate (PEP) through direct phosphoryl transfer between the nucleoside triphosphate and OAA. This Baumannia cicadellinicola subsp. Homalodisca coagulata protein is Phosphoenolpyruvate carboxykinase (ATP).